Here is a 123-residue protein sequence, read N- to C-terminus: Ribosome-binding factor A (123 aa).

It belongs to the RbfA family. Monomer. Binds 30S ribosomal subunits, but not 50S ribosomal subunits or 70S ribosomes.

The protein resides in the cytoplasm. In terms of biological role, one of several proteins that assist in the late maturation steps of the functional core of the 30S ribosomal subunit. Associates with free 30S ribosomal subunits (but not with 30S subunits that are part of 70S ribosomes or polysomes). Required for efficient processing of 16S rRNA. May interact with the 5'-terminal helix region of 16S rRNA. This is Ribosome-binding factor A from Ralstonia nicotianae (strain ATCC BAA-1114 / GMI1000) (Ralstonia solanacearum).